The primary structure comprises 718 residues: Catalase (718 aa).

Catalysis depends on residues histidine 103 and asparagine 176. Tyrosine 390 is a heme binding site.

This sequence belongs to the catalase family. It depends on heme as a cofactor.

The protein resides in the peroxisome matrix. It carries out the reaction 2 H2O2 = O2 + 2 H2O. Functionally, catalyzes the degradation of hydrogen peroxide (H(2)O(2)) generated by peroxisomal oxidases to water and oxygen, thereby protecting cells from the toxic effects of hydrogen peroxide. This is Catalase (CAT1) from Blumeria hordei (Barley powdery mildew).